The sequence spans 489 residues: Palmitoyltransferase ZDHHC14 (489 aa).

Topologically, residues 1 to 60 are cytoplasmic; it reads MPPGGGGPMKDCEYSQISTHSSSPMESPHKKKKIAARRKWEVFPGRNKFFCNGRIMMARQ. A helical membrane pass occupies residues 61-81; the sequence is TGVFYLTLILILVTSGLFFAF. The Lumenal segment spans residues 82–89; it reads DCRYLAEK. A helical membrane pass occupies residues 90 to 110; that stretch reads ITPAIPVVGGILFFFVMGTLL. Over 111–208 the chain is Cytoplasmic; sequence RTSFSDPGVL…GNCVGKRNYR (98 aa). The region spanning 165-215 is the DHHC domain; the sequence is KYCFTCKIFRPPRASHCSLCDNCVEQFDHHCPWVGNCVGKRNYRFFYMFIL. C195 (S-palmitoyl cysteine intermediate) is an active-site residue. The chain crosses the membrane as a helical span at residues 209–229; that stretch reads FFYMFILSLSFLTVFIFAFVI. The Lumenal portion of the chain corresponds to 230–255; the sequence is THVIHRSQQKGFLDALKDSPASVLEA. The chain crosses the membrane as a helical span at residues 256-276; the sequence is VICFFSVWSIIGLSGFHTYLI. The Cytoplasmic portion of the chain corresponds to 277–489; it reads SSNQTTNEDI…VRGLVKLSSV (213 aa). The tract at residues 434-454 is disordered; sequence HGGHQFLTPDEAPSPPRMLGA. Phosphoserine is present on S456.

This sequence belongs to the DHHC palmitoyltransferase family. ERF2/ZDHHC9 subfamily.

Its subcellular location is the endoplasmic reticulum membrane. It is found in the golgi apparatus membrane. It carries out the reaction L-cysteinyl-[protein] + hexadecanoyl-CoA = S-hexadecanoyl-L-cysteinyl-[protein] + CoA. Palmitoyltransferase that could catalyze the addition of palmitate onto various protein substrates. May have a palmitoyltransferase activity toward the beta-2 adrenergic receptor/ADRB2 and thereby regulate G protein-coupled receptor signaling. May play a role in cell differentiation and apoptosis. This Mus musculus (Mouse) protein is Palmitoyltransferase ZDHHC14.